We begin with the raw amino-acid sequence, 214 residues long: Homologous-pairing protein 2 homolog (214 aa).

Positions 79–147 (SDSELKDLDA…EHKLTNIKSA (69 aa)) form a coiled coil. The DNA-binding stretch occupies residues 115–179 (TSSLTTEEML…WKKRKRMATD (65 aa)).

It belongs to the HOP2 family.

The protein resides in the nucleus. In terms of biological role, plays an important role in meiotic recombination. Stimulates DMC1-mediated strand exchange required for pairing of homologous chromosomes during meiosis. The sequence is that of Homologous-pairing protein 2 homolog (psmc3ip) from Xenopus laevis (African clawed frog).